Here is a 364-residue protein sequence, read N- to C-terminus: GTPase Obg (364 aa).

Residues 1-159 (MKFIDEARIE…RNLRLELKVL (159 aa)) form the Obg domain. The segment at 128-147 (IHFKSSTNRAPRQKTDGKAG) is disordered. In terms of domain architecture, OBG-type G spans 160–334 (ADVGLLGMPN…LVHAIQEYLD (175 aa)). Residues 166 to 173 (GMPNAGKS), 191 to 195 (FTTLH), 213 to 216 (DIPG), 284 to 287 (NKLD), and 315 to 317 (SAL) contribute to the GTP site. Serine 173 and threonine 193 together coordinate Mg(2+). The segment at 340–364 (EDAAAAAPDQRLDPTLHNVDHDDQA) is disordered. A compositionally biased stretch (basic and acidic residues) spans 349–364 (QRLDPTLHNVDHDDQA).

Belongs to the TRAFAC class OBG-HflX-like GTPase superfamily. OBG GTPase family. Monomer. Requires Mg(2+) as cofactor.

The protein localises to the cytoplasm. Its function is as follows. An essential GTPase which binds GTP, GDP and possibly (p)ppGpp with moderate affinity, with high nucleotide exchange rates and a fairly low GTP hydrolysis rate. Plays a role in control of the cell cycle, stress response, ribosome biogenesis and in those bacteria that undergo differentiation, in morphogenesis control. The chain is GTPase Obg from Ralstonia pickettii (strain 12J).